The following is a 635-amino-acid chain: Arabinoxylan arabinofuranohydrolase (635 aa).

The N-terminal stretch at methionine 1–alanine 26 is a signal peptide. The active-site Proton acceptor is the aspartate 49. Glutamate 248 serves as the catalytic Proton donor. Residue asparagine 311 coordinates substrate. 2 CBM6 domains span residues threonine 379–threonine 508 and threonine 517–serine 634. Residues glutamate 382, glutamate 384, asparagine 406, leucine 407, aspartate 503, glutamate 520, glutamate 522, aspartate 539, tyrosine 544, aspartate 620, tryptophan 624, aspartate 625, and aspartate 629 each coordinate Ca(2+).

Belongs to the glycosyl hydrolase 43 family.

It is found in the secreted. It catalyses the reaction Hydrolysis of terminal non-reducing alpha-L-arabinofuranoside residues in alpha-L-arabinosides.. The protein operates within glycan degradation; xylan degradation. Its activity is regulated as follows. Activated by calcium and magnesium. Inhibited by copper. Its function is as follows. Cleaves arabinose units from O-2- or O-3-monosubstituted xylose residues, thereby assisting in arabinoxylan (AX) and short-chain arabinoxylo-oligosaccharide (AXOS) degradation. Preferres wheat flour xylan over oat spelt xylan as substrate. Does not display endoxylanase activity. In Paenibacillus polymyxa (Bacillus polymyxa), this protein is Arabinoxylan arabinofuranohydrolase (xynD).